The primary structure comprises 176 residues: Probable inosine/xanthosine triphosphatase (176 aa).

Residue D36 participates in Mg(2+) binding.

This sequence belongs to the YjjX NTPase family. As to quaternary structure, homodimer. It depends on Mg(2+) as a cofactor. The cofactor is Mn(2+).

It catalyses the reaction XTP + H2O = XDP + phosphate + H(+). The catalysed reaction is ITP + H2O = IDP + phosphate + H(+). Phosphatase that hydrolyzes non-canonical purine nucleotides such as XTP and ITP to their respective diphosphate derivatives. Probably excludes non-canonical purines from DNA/RNA precursor pool, thus preventing their incorporation into DNA/RNA and avoiding chromosomal lesions. The chain is Probable inosine/xanthosine triphosphatase from Saccharolobus solfataricus (strain ATCC 35092 / DSM 1617 / JCM 11322 / P2) (Sulfolobus solfataricus).